A 150-amino-acid polypeptide reads, in one-letter code: Troponin C, isoform 2B (150 aa).

Position 1 is an N-acetylmethionine (Met-1). 4 consecutive EF-hand domains span residues Glu-7–Lys-42, Ile-43–Glu-78, Ala-83–Arg-118, and Leu-119–Gly-150. Asp-56, Asp-58, Ser-60, Glu-62, and Glu-67 together coordinate Ca(2+). The Ca(2+) site is built by Asp-132, Asp-134, Ser-136, Thr-138, and Glu-143.

It belongs to the troponin C family.

Functionally, troponin is the central regulatory protein of striated muscle contraction. Tn consists of three components: Tn-I which is the inhibitor of actomyosin ATPase, Tn-T which contains the binding site for tropomyosin and Tn-C. The binding of calcium to Tn-C abolishes the inhibitory action of Tn on actin filaments. This chain is Troponin C, isoform 2B, found in Homarus americanus (American lobster).